The primary structure comprises 262 residues: Acyl-[acyl-carrier-protein]--UDP-N-acetylglucosamine O-acyltransferase (262 aa).

Belongs to the transferase hexapeptide repeat family. LpxA subfamily. Homotrimer.

It localises to the cytoplasm. It catalyses the reaction a (3R)-hydroxyacyl-[ACP] + UDP-N-acetyl-alpha-D-glucosamine = a UDP-3-O-[(3R)-3-hydroxyacyl]-N-acetyl-alpha-D-glucosamine + holo-[ACP]. It functions in the pathway glycolipid biosynthesis; lipid IV(A) biosynthesis; lipid IV(A) from (3R)-3-hydroxytetradecanoyl-[acyl-carrier-protein] and UDP-N-acetyl-alpha-D-glucosamine: step 1/6. Functionally, involved in the biosynthesis of lipid A, a phosphorylated glycolipid that anchors the lipopolysaccharide to the outer membrane of the cell. The protein is Acyl-[acyl-carrier-protein]--UDP-N-acetylglucosamine O-acyltransferase of Wigglesworthia glossinidia brevipalpis.